Consider the following 130-residue polypeptide: Prefoldin subunit alpha (130 aa).

This sequence belongs to the prefoldin subunit alpha family. Heterohexamer of two alpha and four beta subunits.

It localises to the cytoplasm. In terms of biological role, molecular chaperone capable of stabilizing a range of proteins. Seems to fulfill an ATP-independent, HSP70-like function in archaeal de novo protein folding. This chain is Prefoldin subunit alpha, found in Thermoplasma volcanium (strain ATCC 51530 / DSM 4299 / JCM 9571 / NBRC 15438 / GSS1).